Reading from the N-terminus, the 376-residue chain is 1-deoxy-D-xylulose 5-phosphate reductoisomerase (376 aa).

NADPH is bound by residues Ser-10, Gly-11, Ser-12, Val-13, Gly-36, Lys-37, Asn-38, and Asn-118. Lys-119 contacts 1-deoxy-D-xylulose 5-phosphate. Residue Glu-120 participates in NADPH binding. A Mn(2+)-binding site is contributed by Asp-144. Residues Ser-145, Glu-146, Ser-170, and His-193 each contribute to the 1-deoxy-D-xylulose 5-phosphate site. Glu-146 is a Mn(2+) binding site. Residue Gly-199 participates in NADPH binding. 1-deoxy-D-xylulose 5-phosphate contacts are provided by Ser-206, Asn-211, Lys-212, and Glu-215. Residue Glu-215 coordinates Mn(2+).

It belongs to the DXR family. Mg(2+) serves as cofactor. Requires Mn(2+) as cofactor.

It catalyses the reaction 2-C-methyl-D-erythritol 4-phosphate + NADP(+) = 1-deoxy-D-xylulose 5-phosphate + NADPH + H(+). The protein operates within isoprenoid biosynthesis; isopentenyl diphosphate biosynthesis via DXP pathway; isopentenyl diphosphate from 1-deoxy-D-xylulose 5-phosphate: step 1/6. In terms of biological role, catalyzes the NADPH-dependent rearrangement and reduction of 1-deoxy-D-xylulose-5-phosphate (DXP) to 2-C-methyl-D-erythritol 4-phosphate (MEP). In Macrococcus caseolyticus (strain JCSC5402) (Macrococcoides caseolyticum), this protein is 1-deoxy-D-xylulose 5-phosphate reductoisomerase.